Here is a 406-residue protein sequence, read N- to C-terminus: Nicotinate phosphoribosyltransferase (406 aa).

His226 is modified (phosphohistidine; by autocatalysis).

This sequence belongs to the NAPRTase family. Transiently phosphorylated on a His residue during the reaction cycle. Phosphorylation strongly increases the affinity for substrates and increases the rate of nicotinate D-ribonucleotide production. Dephosphorylation regenerates the low-affinity form of the enzyme, leading to product release.

The catalysed reaction is nicotinate + 5-phospho-alpha-D-ribose 1-diphosphate + ATP + H2O = nicotinate beta-D-ribonucleotide + ADP + phosphate + diphosphate. It functions in the pathway cofactor biosynthesis; NAD(+) biosynthesis; nicotinate D-ribonucleotide from nicotinate: step 1/1. Functionally, catalyzes the synthesis of beta-nicotinate D-ribonucleotide from nicotinate and 5-phospho-D-ribose 1-phosphate at the expense of ATP. The sequence is that of Nicotinate phosphoribosyltransferase from Verminephrobacter eiseniae (strain EF01-2).